We begin with the raw amino-acid sequence, 1461 residues long: Formin-3 (1461 aa).

2 disordered regions span residues 1–67 (MASK…SDDN) and 431–457 (YREE…RPTT). Residues 12-28 (TSRSIQSRNSSYSTSSN) are compositionally biased toward low complexity. Polar residues-rich tracts occupy residues 29–53 (ERIG…STND) and 438–457 (PHGN…RPTT). One can recognise a GBD/FH3 domain in the interval 92–508 (SETEQLRKIY…KIQKSMQLLT (417 aa)). The interval 137 to 515 (QHTVLDEATY…LLTHTLEALE (379 aa)) is interaction with tea4. A coiled-coil region spans residues 540–639 (GTAEEIAEYK…VQNSNEQHLQ (100 aa)). Positions 683–811 (GIPVRVHTPS…EPKIDETSLT (129 aa)) are disordered. Residues 700-718 (SFSGSEISSSPSPLLPDVS) show a composition bias toward low complexity. Residues 731 to 784 (SPPPPPPAVIVPTPAPAPIPVPPPAPIMGGPPPPPPPPGVAGAGPPPPPPPPPA) show a composition bias toward pro residues. Positions 801–811 (PEPKIDETSLT) are enriched in basic and acidic residues. Positions 845–1257 (LRDLHKPTRP…RIMSEDRDKL (413 aa)) constitute an FH2 domain. 2 disordered regions span residues 1268–1337 (AKYR…AEEK) and 1416–1461 (ERLQ…RQKQ). Basic and acidic residues-rich tracts occupy residues 1273–1315 (KREL…KTGD) and 1325–1337 (MEDL…AEEK). Polar residues predominate over residues 1445-1454 (TNGSNASNLV).

The protein belongs to the formin homology family. In terms of assembly, interacts with rax2, rho3 and tea4. Interacts with tea1 in the presence of tea4.

It is found in the cytoplasm. Its subcellular location is the cell cortex. The protein resides in the cell tip. Functionally, involved in controlling polarized cell growth. Required for interphase actin cable formation and microtubule organization. This Schizosaccharomyces pombe (strain 972 / ATCC 24843) (Fission yeast) protein is Formin-3 (for3).